Here is a 254-residue protein sequence, read N- to C-terminus: Small ribosomal subunit protein uS3 (254 aa).

Positions 38-106 constitute a KH type-2 domain; that stretch reads IRKYVLARIP…DVQINIFEIK (69 aa). Positions 215–238 are enriched in low complexity; that stretch reads NVGNAASGASSSSNNDNASPNQGG. Residues 215–254 are disordered; it reads NVGNAASGASSSSNNDNASPNQGGPRRKRGGEGNRKKSNK. Over residues 244–254 the composition is skewed to basic and acidic residues; the sequence is GGEGNRKKSNK.

It belongs to the universal ribosomal protein uS3 family. As to quaternary structure, part of the 30S ribosomal subunit. Forms a tight complex with proteins S10 and S14.

Functionally, binds the lower part of the 30S subunit head. Binds mRNA in the 70S ribosome, positioning it for translation. This is Small ribosomal subunit protein uS3 from Cytophaga hutchinsonii (strain ATCC 33406 / DSM 1761 / CIP 103989 / NBRC 15051 / NCIMB 9469 / D465).